A 907-amino-acid polypeptide reads, in one-letter code: Protein translocase subunit SecA (907 aa).

ATP is bound by residues glutamine 87, glycine 105 to threonine 109, and aspartate 513. The segment covering glutamate 841–arginine 853 has biased composition (basic and acidic residues). The interval glutamate 841–asparagine 907 is disordered. Residues arginine 854–glutamine 865 are compositionally biased toward low complexity. Over residues glutamate 872 to arginine 887 the composition is skewed to basic and acidic residues. Residues cysteine 891, cysteine 893, cysteine 902, and histidine 903 each coordinate Zn(2+).

This sequence belongs to the SecA family. As to quaternary structure, monomer and homodimer. Part of the essential Sec protein translocation apparatus which comprises SecA, SecYEG and auxiliary proteins SecDF-YajC and YidC. Requires Zn(2+) as cofactor.

Its subcellular location is the cell inner membrane. The protein localises to the cytoplasm. The enzyme catalyses ATP + H2O + cellular proteinSide 1 = ADP + phosphate + cellular proteinSide 2.. Functionally, part of the Sec protein translocase complex. Interacts with the SecYEG preprotein conducting channel. Has a central role in coupling the hydrolysis of ATP to the transfer of proteins into and across the cell membrane, serving both as a receptor for the preprotein-SecB complex and as an ATP-driven molecular motor driving the stepwise translocation of polypeptide chains across the membrane. The polypeptide is Protein translocase subunit SecA (Vibrio vulnificus (strain CMCP6)).